A 255-amino-acid chain; its full sequence is Small ribosomal subunit protein eS1 (255 aa).

Ala2 is subject to N-acetylalanine; partial.

It belongs to the eukaryotic ribosomal protein eS1 family. In terms of assembly, component of the small ribosomal subunit. Mature ribosomes consist of a small (40S) and a large (60S) subunit. The 40S subunit contains about 33 different proteins and 1 molecule of RNA (18S). The 60S subunit contains about 49 different proteins and 3 molecules of RNA (25S, 5.8S and 5S).

The protein localises to the cytoplasm. This chain is Small ribosomal subunit protein eS1, found in Yarrowia lipolytica (strain CLIB 122 / E 150) (Yeast).